Reading from the N-terminus, the 123-residue chain is U7 snRNA-associated Sm-like protein LSm10 (123 aa).

The Sm domain maps to 16 to 88; it reads SLIILLQGLQ…VRYVHIPDDV (73 aa).

The protein belongs to the snRNP Sm proteins family. Component of the heptameric ring U7 snRNP complex, or U7 Sm protein core complex, at least composed of LSM10, LSM11, SNRPB, SNRPD3, SNRPE, SNRPF, SNRPG and U7 snRNA. Formation of the U7 snRNP is an ATP-dependent process mediated by a specialized SMN complex containing at least the Sm protein core complex and additionally, the U7-specific LSM10 and LSM11 proteins. Interacts with CLNS1A and SMN. In terms of processing, not methylated. Methylation is not necessary for interaction with SMN.

It localises to the nucleus. Functionally, appears to function in the U7 snRNP complex that is involved in histone 3'-end processing. Increases U7 snRNA levels but not histone 3'-end pre-mRNA processing activity, when overexpressed. Required for cell cycle progression from G1 to S phases. Binds specifically to U7 snRNA. Binds to the downstream cleavage product (DCP) of histone pre-mRNA in a U7 snRNP dependent manner. This chain is U7 snRNA-associated Sm-like protein LSm10 (LSM10), found in Homo sapiens (Human).